Reading from the N-terminus, the 680-residue chain is 1-deoxy-D-xylulose-5-phosphate synthase (680 aa).

Thiamine diphosphate is bound by residues histidine 113 and 154–156; that span reads GHS. Mg(2+) is bound at residue aspartate 185. Thiamine diphosphate contacts are provided by residues 186 to 187, asparagine 214, phenylalanine 323, and glutamate 408; that span reads GA. Asparagine 214 is a Mg(2+) binding site.

This sequence belongs to the transketolase family. DXPS subfamily. Homodimer. It depends on Mg(2+) as a cofactor. Thiamine diphosphate is required as a cofactor.

It carries out the reaction D-glyceraldehyde 3-phosphate + pyruvate + H(+) = 1-deoxy-D-xylulose 5-phosphate + CO2. It functions in the pathway metabolic intermediate biosynthesis; 1-deoxy-D-xylulose 5-phosphate biosynthesis; 1-deoxy-D-xylulose 5-phosphate from D-glyceraldehyde 3-phosphate and pyruvate: step 1/1. In terms of biological role, catalyzes the acyloin condensation reaction between C atoms 2 and 3 of pyruvate and glyceraldehyde 3-phosphate to yield 1-deoxy-D-xylulose-5-phosphate (DXP). This chain is 1-deoxy-D-xylulose-5-phosphate synthase, found in Psychrobacter arcticus (strain DSM 17307 / VKM B-2377 / 273-4).